Here is a 418-residue protein sequence, read N- to C-terminus: Dual-specificity RNA methyltransferase RlmN (418 aa).

A disordered region spans residues M1–D21. Residue E122 is the Proton acceptor of the active site. Residues D128–D383 form the Radical SAM core domain. A disulfide bond links C135 and C388. 3 residues coordinate [4Fe-4S] cluster: C142, C146, and C149. S-adenosyl-L-methionine is bound by residues G212–E213, S244, S266–H268, and N345. C388 acts as the S-methylcysteine intermediate in catalysis. A disordered region spans residues T393 to A418. Over residues S399–A408 the composition is skewed to basic and acidic residues.

The protein belongs to the radical SAM superfamily. RlmN family. It depends on [4Fe-4S] cluster as a cofactor.

It is found in the cytoplasm. The enzyme catalyses adenosine(2503) in 23S rRNA + 2 reduced [2Fe-2S]-[ferredoxin] + 2 S-adenosyl-L-methionine = 2-methyladenosine(2503) in 23S rRNA + 5'-deoxyadenosine + L-methionine + 2 oxidized [2Fe-2S]-[ferredoxin] + S-adenosyl-L-homocysteine. The catalysed reaction is adenosine(37) in tRNA + 2 reduced [2Fe-2S]-[ferredoxin] + 2 S-adenosyl-L-methionine = 2-methyladenosine(37) in tRNA + 5'-deoxyadenosine + L-methionine + 2 oxidized [2Fe-2S]-[ferredoxin] + S-adenosyl-L-homocysteine. Specifically methylates position 2 of adenine 2503 in 23S rRNA and position 2 of adenine 37 in tRNAs. m2A2503 modification seems to play a crucial role in the proofreading step occurring at the peptidyl transferase center and thus would serve to optimize ribosomal fidelity. The sequence is that of Dual-specificity RNA methyltransferase RlmN from Erythrobacter litoralis (strain HTCC2594).